Here is a 702-residue protein sequence, read N- to C-terminus: Elongation factor G 2 (702 aa).

The tr-type G domain occupies 8–290; the sequence is ERYRNIGISA…AVIDYLPSPV (283 aa). GTP contacts are provided by residues 17–24, 88–92, and 142–145; these read AHIDAGKT, DTPGH, and NKMD.

It belongs to the TRAFAC class translation factor GTPase superfamily. Classic translation factor GTPase family. EF-G/EF-2 subfamily.

The protein resides in the cytoplasm. Catalyzes the GTP-dependent ribosomal translocation step during translation elongation. During this step, the ribosome changes from the pre-translocational (PRE) to the post-translocational (POST) state as the newly formed A-site-bound peptidyl-tRNA and P-site-bound deacylated tRNA move to the P and E sites, respectively. Catalyzes the coordinated movement of the two tRNA molecules, the mRNA and conformational changes in the ribosome. In Cupriavidus metallidurans (strain ATCC 43123 / DSM 2839 / NBRC 102507 / CH34) (Ralstonia metallidurans), this protein is Elongation factor G 2.